Consider the following 1164-residue polypeptide: MVKEFLGEGSQAGQNLLRLVSRGNAIIAELLRLSAHIPSVFKLEDRNEARKYQDILLDFKYLSNPDFYESKIEENADLVDLETEFRDNHIDILIRFYHLFESIYKYIMDLEHYIVDVEKGFYIHLTIEAILINGDGKQLLSEAVYLYGVMLILMDNLIEGPVRERMLISYLRNKGPVDLPLIDEVCKLCKSTGYIPGSPKKPPNYPEEYFRRVELPENVISMIVGRLRSDDLYNGTESFPQPEHRSVALSTQACMIYVILYFIPDILNNKNSIMREIVDKFFPDNWVISFFLGFTIDLSVAWEPYKAAKTAMGNTIIQSNIQYQTQRFWKEVSELNKLVDDLLVDGLLVEEYIVDNVHKIITTLRRCNVTIRWVMLHSNASQKKFKDLVLMGGSQEDVLYLLLNTAQLEFVFKNIFQQLLATKEEKWEENKKLASDSMVELSEYFSGEKALTRVKKNENLQKWFGEISQKISQLDSTDSTSTGRKIQQLSLALEEVEQFQQIDSSIQVKQFLIETRQFLTKMIKIVNIKEEVLVNLSVCADMSYAWEIVNNYVDQMQKGIKSDPKCVLKLRATFLKLVSILDLPLVRIAQCSSPDLISVSEYYSGELVGYVRKVLEIVPKQMFLILKQIINMQTNNIQEMPTKVEKERLRDFAQLDQRYDLARATHSVSVFTEGILAMETTLVGIIEVDPKQLLEDGIRKELVLQIALAMDKTLIFSGKPYQAPSNKQQQQEIELLQRLKELSNILDGFRRSFQYIQDYVNIQGLKIWQEEFSRIVNFYVEQECNSFLKKKVYDWQSQYQSVAIPIPKFPSQSDQNSQQSVNMIGRLARELLNQTNCKTTLYLNQIGWFDPSSGKELVGINTWSILHQSVGIFGLTGLDKLFSFMMVKDLQVFVSQTRSLVEKSLKGFLNEFEDYLRPTTNIPDTMIRYQQALDKTKLLYPIFIDVLTKIGQIQLIRRQISNQLNFHCKIDSNMLFSSLDIMNKSLLNDIESHFQRPDSNPYPSDDNTLLFDLAQYLDTAGINDPFTKIYITTSPLEQFPCLLFLFVLSQVSKFQFNSKLNVMSSKKQKNSYDWTPFIIGCITILQQFHSLHTQKFLAFVGQYIKSHINIALANPKENNKDDADYPEDVIGLLRFLEDFCKYSHTSRKIVEGYVPPYIFDYYNN.

This sequence belongs to the strumpellin family. Probable component of the WASH complex.

The polypeptide is WASH complex subunit 5 (Dictyostelium discoideum (Social amoeba)).